The chain runs to 116 residues: Putative antiporter subunit mnhC2 (116 aa).

3 helical membrane passes run 3 to 23, 28 to 48, and 72 to 92; these read LILL…ILSL, IVIG…SMGH, and AIVL…LVLV.

Belongs to the CPA3 antiporters (TC 2.A.63) subunit C family. May form a heterooligomeric complex that consists of seven subunits: mnhA2, mnhB2, mnhC2, mnhD2, mnhE2, mnhF2 and mnhG2.

It is found in the cell membrane. This is Putative antiporter subunit mnhC2 (mnhC2) from Staphylococcus haemolyticus (strain JCSC1435).